A 445-amino-acid chain; its full sequence is Phosphoglucosamine mutase (445 aa).

Ser102 acts as the Phosphoserine intermediate in catalysis. Positions 102, 241, 243, and 245 each coordinate Mg(2+). Ser102 bears the Phosphoserine mark.

It belongs to the phosphohexose mutase family. Mg(2+) serves as cofactor. In terms of processing, activated by phosphorylation.

The enzyme catalyses alpha-D-glucosamine 1-phosphate = D-glucosamine 6-phosphate. In terms of biological role, catalyzes the conversion of glucosamine-6-phosphate to glucosamine-1-phosphate. This is Phosphoglucosamine mutase from Aliivibrio fischeri (strain ATCC 700601 / ES114) (Vibrio fischeri).